A 434-amino-acid chain; its full sequence is Protein trichome birefringence-like 3 (434 aa).

A helical; Signal-anchor for type II membrane protein membrane pass occupies residues 15 to 35; the sequence is IPLSIIVLVLCGFMFFILLYT. Residues 166–168 carry the GDS motif motif; that stretch reads GDS. Residues 413–427 carry the DCXHWCLPGXXDXWN motif motif; that stretch reads DCIHWCLPGLPDTWN.

It belongs to the PC-esterase family. TBL subfamily.

Its subcellular location is the golgi apparatus membrane. Its function is as follows. Involved in secondary cell wall cellulose deposition. Required for normal stem development. May act as a bridging protein that binds pectin and other cell wall polysaccharides. Probably involved in maintaining esterification of pectins. May be involved in the specific O-acetylation of cell wall polymers. In Arabidopsis thaliana (Mouse-ear cress), this protein is Protein trichome birefringence-like 3 (TBL3).